Reading from the N-terminus, the 114-residue chain is ATP-dependent Clp protease adapter protein ClpS (114 aa).

This sequence belongs to the ClpS family. In terms of assembly, binds to the N-terminal domain of the chaperone ClpA.

Involved in the modulation of the specificity of the ClpAP-mediated ATP-dependent protein degradation. This is ATP-dependent Clp protease adapter protein ClpS from Bdellovibrio bacteriovorus (strain ATCC 15356 / DSM 50701 / NCIMB 9529 / HD100).